We begin with the raw amino-acid sequence, 627 residues long: DNA topoisomerase 4 subunit B (627 aa).

Residues tyrosine 4, asparagine 41, aspartate 68, 109–115, and lysine 333 each bind ATP; that span reads GLHGVGV. The 114-residue stretch at 412–525 folds into the Toprim domain; the sequence is TELFIVEGDS…NGHIYIAQPP (114 aa). Mg(2+) is bound by residues glutamate 418, aspartate 490, and aspartate 492.

Belongs to the type II topoisomerase family. ParE type 1 subfamily. In terms of assembly, heterotetramer composed of ParC and ParE. It depends on Mg(2+) as a cofactor. Requires Mn(2+) as cofactor. Ca(2+) is required as a cofactor.

The catalysed reaction is ATP-dependent breakage, passage and rejoining of double-stranded DNA.. With respect to regulation, pyrrolopyrimidines inhibit both GyrB and its paralog in topoisomerase IV (parE). Topoisomerase IV is essential for chromosome segregation. It relaxes supercoiled DNA. Performs the decatenation events required during the replication of a circular DNA molecule. The sequence is that of DNA topoisomerase 4 subunit B from Francisella tularensis subsp. holarctica (strain LVS).